A 214-amino-acid polypeptide reads, in one-letter code: Dephospho-CoA kinase (214 aa).

The 201-residue stretch at 4–204 (IVGLTGGIGS…QRYLQLAQQK (201 aa)) folds into the DPCK domain. 12–17 (GSGKST) contributes to the ATP binding site.

This sequence belongs to the CoaE family.

It localises to the cytoplasm. It carries out the reaction 3'-dephospho-CoA + ATP = ADP + CoA + H(+). It functions in the pathway cofactor biosynthesis; coenzyme A biosynthesis; CoA from (R)-pantothenate: step 5/5. In terms of biological role, catalyzes the phosphorylation of the 3'-hydroxyl group of dephosphocoenzyme A to form coenzyme A. The protein is Dephospho-CoA kinase of Mannheimia succiniciproducens (strain KCTC 0769BP / MBEL55E).